The following is a 95-amino-acid chain: Co-chaperonin GroES (95 aa).

It belongs to the GroES chaperonin family. In terms of assembly, heptamer of 7 subunits arranged in a ring. Interacts with the chaperonin GroEL.

The protein resides in the cytoplasm. Together with the chaperonin GroEL, plays an essential role in assisting protein folding. The GroEL-GroES system forms a nano-cage that allows encapsulation of the non-native substrate proteins and provides a physical environment optimized to promote and accelerate protein folding. GroES binds to the apical surface of the GroEL ring, thereby capping the opening of the GroEL channel. The sequence is that of Co-chaperonin GroES from Glaesserella parasuis serovar 5 (strain SH0165) (Haemophilus parasuis).